Consider the following 665-residue polypeptide: GRB2-associated-binding protein 2 (665 aa).

Ser-2 carries the phosphoserine modification. The region spanning 8–119 is the PH domain; sequence DVVCTGWLRK…WVQSICQICG (112 aa). The segment at 131–184 is disordered; sequence RNLSSASHGPRSSPAEFSSSQHLLRERKSSAPSHSSQPTLFTFEPPVSSHMQPT. Residues Ser-135, Ser-142, Ser-143, Ser-149, Ser-150, Ser-160, Ser-165, Ser-211, Ser-220, and Ser-261 each carry the phosphoserine modification. Over residues 160–170 the composition is skewed to polar residues; the sequence is SAPSHSSQPTL. Phosphothreonine is present on Thr-262. A Phosphotyrosine modification is found at Tyr-263. Phosphothreonine is present on Thr-275. A phosphoserine mark is found at Ser-278 and Ser-282. Thr-284 is subject to Phosphothreonine. Tyr-290 is subject to Phosphotyrosine. Thr-328 is subject to Phosphothreonine. A disordered region spans residues 338 to 396; that stretch reads VATPGDSAIAPPPRPPKPSQAETSQWGSIQQRPPISENSRSVAATIPRRNTLPAMDNSR. Residues 348 to 355 carry the SH3-binding motif; it reads PPPRPPKP. The span at 357–379 shows a compositional bias: polar residues; sequence QAETSQWGSIQQRPPISENSRSV. Phosphoserine is present on Ser-365. Phosphothreonine is present on residues Thr-382 and Thr-388. Residue Ser-402 is modified to Phosphoserine. Thr-405 bears the Phosphothreonine mark. The tract at residues 408–445 is disordered; the sequence is YPARGSGESASWSAEPPGKTAVGRSNSASSDDNYVPMN. A Phosphoserine modification is found at Ser-420. A compositionally biased stretch (polar residues) spans 430 to 439; sequence GRSNSASSDD. Tyr-441 carries the phosphotyrosine modification. The residue at position 469 (Ser-469) is a Phosphoserine. Positions 491-517 are disordered; it reads PSRGSEIQPPPVNRNLKPDRKAKPTPL. The SH3-binding motif lies at 499–508; it reads PPPVNRNLKP. Ser-532 carries the post-translational modification Phosphoserine. Polar residues-rich tracts occupy residues 548–566 and 578–600; these read SSSQ…STDS and NPVS…STGS. 2 disordered regions span residues 548-632 and 646-665; these read SSSQ…KVDY and TMQE…GAKL. Ser-612 carries the post-translational modification Phosphoserine. The residue at position 632 (Tyr-632) is a Phosphotyrosine. Residues 646-659 are compositionally biased toward polar residues; sequence TMQEWTDVRQSSEP.

The protein belongs to the GAB family. As to quaternary structure, part of a complex composed of EEIG1, TNFRSF11A/RANK, PLCG2, GAB2, TEC and BTK; complex formation increases in the presence of TNFSF11/RANKL. Interacts with HCK. Interacts with SHC1; may mediate interaction with receptors. Interacts with SYK. Interacts with PI-3 kinase. Interacts with GRB2 (via SH3 2 domain). Interacts (phosphorylated) with PTPN11. Interacts with TNFRSF11A (via cytoplasmic domain). Interacts (phosphorylated) with 14-3-3 family proteins SFN, YWHAB, YWHAE, YWHAG, YWHAH, YWHAQ and YWHAZ; prevents interaction with GRB2 and attenuates GAB2 signaling. Phosphorylated upon EGF stimulation. Phosphorylated on tyrosine residues by HCK upon IL6 signaling. Phosphorylated on tyrosine residue(s) by the thrombopoietin receptor (TPOR), stem cell factor receptor (SCFR), and T-cell and B-cell antigen receptors, gp130, IL-2R and IL-3R. Phosphorylated upon stimulation of TNFRSF11A/RANK by TNFSF11/RANKL. Post-translationally, dephosphorylated by PTPN11. Ubiquitously expressed.

The protein resides in the cytoplasm. Its subcellular location is the cell membrane. The protein localises to the membrane raft. In terms of biological role, adapter protein which acts downstream of several membrane receptors including cytokine, antigen, hormone, cell matrix and growth factor receptors to regulate multiple signaling pathways. Regulates osteoclast differentiation mediating the TNFRSF11A/RANK signaling. In allergic response, it plays a role in mast cells activation and degranulation through PI-3-kinase regulation. Also involved in the regulation of cell proliferation and hematopoiesis. This chain is GRB2-associated-binding protein 2 (Gab2), found in Mus musculus (Mouse).